A 329-amino-acid chain; its full sequence is Glycerol-3-phosphate dehydrogenase [NAD(P)+] (329 aa).

4 residues coordinate NADPH: Ser13, Trp14, His34, and Lys105. Residues Lys105, Gly134, and Ser136 each coordinate sn-glycerol 3-phosphate. Residue Ala138 participates in NADPH binding. 5 residues coordinate sn-glycerol 3-phosphate: Lys189, Asp242, Ser252, Arg253, and Asn254. The Proton acceptor role is filled by Lys189. NADPH is bound at residue Arg253. Val277 and Glu279 together coordinate NADPH.

Belongs to the NAD-dependent glycerol-3-phosphate dehydrogenase family.

It is found in the cytoplasm. It carries out the reaction sn-glycerol 3-phosphate + NAD(+) = dihydroxyacetone phosphate + NADH + H(+). The catalysed reaction is sn-glycerol 3-phosphate + NADP(+) = dihydroxyacetone phosphate + NADPH + H(+). Its pathway is membrane lipid metabolism; glycerophospholipid metabolism. Its function is as follows. Catalyzes the reduction of the glycolytic intermediate dihydroxyacetone phosphate (DHAP) to sn-glycerol 3-phosphate (G3P), the key precursor for phospholipid synthesis. The protein is Glycerol-3-phosphate dehydrogenase [NAD(P)+] of Legionella pneumophila subsp. pneumophila (strain Philadelphia 1 / ATCC 33152 / DSM 7513).